Here is a 96-residue protein sequence, read N- to C-terminus: Fluoride-specific ion channel FluC 1 (96 aa).

2 consecutive transmembrane segments (helical) span residues 4–24 (LIQG…RLAL) and 26–46 (LWLG…AFLM). Na(+)-binding residues include Gly-61 and Thr-64. The helical transmembrane segment at 69 to 89 (MMLNDVSFYFFTAVGCILAWL) threads the bilayer.

Belongs to the fluoride channel Fluc/FEX (TC 1.A.43) family.

The protein localises to the cell membrane. It catalyses the reaction fluoride(in) = fluoride(out). Na(+) is not transported, but it plays an essential structural role and its presence is essential for fluoride channel function. Its function is as follows. Fluoride-specific ion channel. Important for reducing fluoride concentration in the cell, thus reducing its toxicity. In Corynebacterium glutamicum (strain ATCC 13032 / DSM 20300 / JCM 1318 / BCRC 11384 / CCUG 27702 / LMG 3730 / NBRC 12168 / NCIMB 10025 / NRRL B-2784 / 534), this protein is Fluoride-specific ion channel FluC 1.